Reading from the N-terminus, the 232-residue chain is Secreted LysM effector Mg3LysM (232 aa).

A signal peptide spans 1–16 (MQNIFLAATLLGAAFA). In terms of domain architecture, LysM 1 spans 47 to 91 (TNYTVKAGDTLGAIAKQYNSGVCDIAKVNGIDNPDYIKPDQVLSI). Asparagine 48, asparagine 100, asparagine 138, asparagine 195, asparagine 209, and asparagine 227 each carry an N-linked (GlcNAc...) asparagine glycan. 2 consecutive LysM domains span residues 120–165 (STYT…VINT) and 177–221 (GTYV…IIIL).

This sequence belongs to the secreted LysM effector family.

Functionally, secreted effector that enables the plant pathogenic fungus to manipulate host defenses for successful infection. Binds chitin fragments and blocks the activation of chitin-induced plant defense responses. Protects fungal hyphae against hydrolytic plant enzymes. This is Secreted LysM effector Mg3LysM from Zymoseptoria tritici (strain CBS 115943 / IPO323) (Speckled leaf blotch fungus).